Reading from the N-terminus, the 651-residue chain is Acetyl-coenzyme A synthetase (651 aa).

CoA is bound by residues 191 to 194, T311, and N335; that span reads RGGK. Residues 387-389, 411-416, D500, and R515 contribute to the ATP site; these read GEP and DTWWQT. S523 is a binding site for CoA. An ATP-binding site is contributed by R526. Residues V537, H539, and V542 each contribute to the Mg(2+) site. R584 is a binding site for CoA. Position 609 is an N6-acetyllysine (K609).

It belongs to the ATP-dependent AMP-binding enzyme family. It depends on Mg(2+) as a cofactor. Acetylated. Deacetylation by the SIR2-homolog deacetylase activates the enzyme.

It carries out the reaction acetate + ATP + CoA = acetyl-CoA + AMP + diphosphate. Catalyzes the conversion of acetate into acetyl-CoA (AcCoA), an essential intermediate at the junction of anabolic and catabolic pathways. AcsA undergoes a two-step reaction. In the first half reaction, AcsA combines acetate with ATP to form acetyl-adenylate (AcAMP) intermediate. In the second half reaction, it can then transfer the acetyl group from AcAMP to the sulfhydryl group of CoA, forming the product AcCoA. The polypeptide is Acetyl-coenzyme A synthetase (Pseudomonas syringae pv. tomato (strain ATCC BAA-871 / DC3000)).